The chain runs to 358 residues: DnaJ homolog subfamily C member 18 (358 aa).

The J domain occupies 82–146 (NYYEILGVSR…DKRLRYDEYG (65 aa)). A helical membrane pass occupies residues 228 to 248 (AFIQLLPVLVIVIISVITQLL).

The protein resides in the endoplasmic reticulum membrane. In terms of biological role, (Microbial infection) In case of infection by polyomavirus, involved in the virus endoplasmic reticulum membrane penetration and infection. Regulates the recruitment of DNAJB12:DNAJB14 into SV40-induced foci and all cooperate to guide SV40 across the endoplasmic reticulum membrane. The foci represent the site from which SV40 penetrates into the cytosol. In Homo sapiens (Human), this protein is DnaJ homolog subfamily C member 18.